Consider the following 82-residue polypeptide: Putative membrane protein insertion efficiency factor (82 aa).

This sequence belongs to the UPF0161 family.

The protein resides in the cell inner membrane. Functionally, could be involved in insertion of integral membrane proteins into the membrane. The protein is Putative membrane protein insertion efficiency factor of Rickettsia rickettsii (strain Iowa).